The sequence spans 467 residues: 5-phosphohydroxy-L-lysine phospho-lyase (467 aa).

The residue at position 278 (K278) is an N6-(pyridoxal phosphate)lysine.

Belongs to the class-III pyridoxal-phosphate-dependent aminotransferase family. In terms of assembly, homotetramer. Requires pyridoxal 5'-phosphate as cofactor.

The protein resides in the mitochondrion. It carries out the reaction (5R)-5-phosphooxy-L-lysine + H2O = (S)-2-amino-6-oxohexanoate + NH4(+) + phosphate. In terms of biological role, catalyzes the pyridoxal-phosphate-dependent breakdown of 5-phosphohydroxy-L-lysine, converting it to ammonia, inorganic phosphate and 2-aminoadipate semialdehyde. The polypeptide is 5-phosphohydroxy-L-lysine phospho-lyase (Phykpl) (Mus musculus (Mouse)).